Here is a 138-residue protein sequence, read N- to C-terminus: Acid shock protein (138 aa).

The N-terminal stretch at 1–21 is a signal peptide; sequence MKKVLALIVAATMGLSSVAFA. Positions 22–85 are excised as a propeptide; the sequence is ADAVAPAAAA…TKKAPAQKAQ (64 aa). Residues 31–50 show a composition bias toward low complexity; it reads APAATTTAAPAAAATKAPAK. Residues 31–138 form a disordered region; that stretch reads APAATTTAAP…ATKKAAPAAK (108 aa). Basic residues-rich tracts occupy residues 51 to 77 and 122 to 131; these read ATHHKKAHKKAPAQKAQAAKKHHKATK and AAKKHHKATK.

This sequence belongs to the Asr family. In terms of processing, proteolytic processing gives rise to the active protein.

Its subcellular location is the periplasm. Functionally, required for growth and/or survival at acidic conditions. The protein is Acid shock protein of Serratia proteamaculans (strain 568).